Here is an 873-residue protein sequence, read N- to C-terminus: K(+)/H(+) antiporter 1 (873 aa).

Residues 1-23 are Extracellular-facing; sequence MANTVGGILSGVNPFHYNSSSPL. Residues 24-44 form a helical membrane-spanning segment; that stretch reads TLFLFQACLILLVCNLIHIPF. Residues 45–51 lie on the Cytoplasmic side of the membrane; it reads SMMRQPK. Residues 52-72 traverse the membrane as a helical segment; sequence VISEVISGVILGPTIFGQIPN. Topologically, residues 73 to 82 are extracellular; sequence YTNTIFPTSS. The chain crosses the membrane as a helical span at residues 83–103; it reads IPGLNLVANLGIILFMFFLGL. The Cytoplasmic segment spans residues 104-116; that stretch reads EVDIAFIKKHLKK. Residues 117 to 137 form a helical membrane-spanning segment; the sequence is ALVIGIVTLAVPFGFGCLLAI. Residues 138 to 154 are Extracellular-facing; it reads PLFHTYANKTEGERHIK. A helical transmembrane segment spans residues 155 to 175; the sequence is FSVFMVFIAVSISVTAFPVLC. The Cytoplasmic segment spans residues 176–188; that stretch reads RILNELRLIKDRA. The helical transmembrane segment at 189-209 threads the bilayer; that stretch reads GIVVLAAGIINDIMGWILLAL. The Extracellular portion of the chain corresponds to 210–220; the sequence is SIILSSAEGSP. A helical transmembrane segment spans residues 221–241; that stretch reads VNTVYILLITFAWFLIYFFPL. Residues 242–267 lie on the Cytoplasmic side of the membrane; sequence KYLLRWVLIRTHELDRSKPSPLATMC. Residues 268–288 form a helical membrane-spanning segment; sequence ILFIMFISAYFTDIIGVHPIF. Topologically, residues 289-316 are extracellular; the sequence is GAFIAGLVVPRDDHYVVKLTERMEDIPN. The helical transmembrane segment at 317–337 threads the bilayer; sequence IVFIPIYFAVAGLNVDLTLLN. Residues 338 to 341 are Cytoplasmic-facing; it reads EGRD. Residues 342 to 362 traverse the membrane as a helical segment; it reads WGYVFATIGIAIFTKIISGTL. Residues 363 to 375 lie on the Extracellular side of the membrane; the sequence is TAKLTGLFWREAT. Residues 376–396 form a helical membrane-spanning segment; sequence AAGVLMSCKGIVEIVVLTVGL. Residues 397 to 404 lie on the Cytoplasmic side of the membrane; the sequence is NAGIISRK. Residues 405–425 form a helical membrane-spanning segment; that stretch reads IFGMFVLMALVSTFVTTPLTQ. Topologically, residues 426-726 are extracellular; that stretch reads LVYPDSYRDG…DRFKRKRFNL (301 aa). Position 557 is a phosphoserine (S557). Residue K562 forms a Glycyl lysine isopeptide (Lys-Gly) (interchain with G-Cter in ubiquitin) linkage. The helical transmembrane segment at 727-747 threads the bilayer; that stretch reads LLPKPYLTQSDYLGLYLLLLI. The Cytoplasmic portion of the chain corresponds to 748 to 873; that stretch reads CYRDGYNNDN…TLIVHHFSSE (126 aa).

The protein belongs to the monovalent cation:proton antiporter 2 (CPA2) transporter (TC 2.A.37) family.

The protein localises to the membrane. In terms of biological role, potassium-proton antiport. The chain is K(+)/H(+) antiporter 1 (KHA1) from Saccharomyces cerevisiae (strain ATCC 204508 / S288c) (Baker's yeast).